The sequence spans 352 residues: C-X-C chemokine receptor type 4 (352 aa).

Residues 1–21 (MEGISIYTSDNYSEELGSGDY) form an important for chemokine binding and signaling region. Residues 1–38 (MEGISIYTSDNYSEELGSGDYDSIKEPCFREENAHFNR) are Extracellular-facing. A Sulfotyrosine modification is found at Y7. N-linked (GlcNAc...) asparagine glycosylation is present at N11. Residue Y12 is modified to Sulfotyrosine. An O-linked (Xyl...) (chondroitin sulfate) serine glycan is attached at S18. Residue Y21 is modified to Sulfotyrosine. Disulfide bonds link C28–C274 and C109–C186. The chain crosses the membrane as a helical span at residues 39–63 (IFLPTIYSIIFLTGIVGNGLVILVM). The Cytoplasmic portion of the chain corresponds to 64-77 (GYQKKLRSMTDKYR). The chain crosses the membrane as a helical span at residues 78–99 (LHLSVADLLFVITLPFWAVDAV). The tract at residues 94–97 (WAVD) is chemokine binding. Topologically, residues 100–110 (ANWYFGNFLCK) are extracellular. Residues 111–130 (AVHVIYTVNLYSSVLILAFI) form a helical membrane-spanning segment. A chemokine binding region spans residues 113–117 (HVIYT). Residues 131 to 154 (SLDRYLAIVHATNSQRPRKLLAEK) lie on the Cytoplasmic side of the membrane. Positions 133-135 (DRY) match the Important for signaling motif. The tract at residues 135-147 (YLAIVHATNSQRP) is involved in dimerization; when bound to chemokine. A helical membrane pass occupies residues 155-174 (VVYVGVWIPALLLTIPDFIF). Residues 175–195 (ANVSEAEDRYICDRFYPNDLW) lie on the Extracellular side of the membrane. The tract at residues 186–190 (CDRFY) is chemokine binding, important for signaling. Residues 191-210 (PNDLWVVVFQFQHIMVGLIL) form an involved in dimerization region. Residues 196 to 216 (VVVFQFQHIMVGLILPGIVIL) form a helical membrane-spanning segment. At 217-241 (SCYCIIISKLSHSKGHQKRKALKTT) the chain is on the cytoplasmic side. Residues 242 to 261 (VILILAFFACWLPYYIGISI) traverse the membrane as a helical segment. The Extracellular segment spans residues 262 to 282 (DSFILLEIIKQGCEFESTVHK). The involved in dimerization stretch occupies residues 266 to 268 (LLE). Residues 283–302 (WISITEALAFFHCCLNPILY) form a helical membrane-spanning segment. Residues 303–352 (AFLGAKFKSSAQHALTSVSRGSSLKILSKGKRGGHSSVSTESESSSFHSS) are Cytoplasmic-facing. Residues S319 and S321 each carry the phosphoserine modification. Phosphoserine; by PKC and GRK6 is present on residues S324 and S325. A disordered region spans residues 329-352 (LSKGKRGGHSSVSTESESSSFHSS). S330 is subject to Phosphoserine; by GRK6. A Glycyl lysine isopeptide (Lys-Gly) (interchain with G-Cter in ubiquitin) cross-link involves residue K331. Over residues 337-352 (HSSVSTESESSSFHSS) the composition is skewed to low complexity. A Phosphoserine; by GRK6 modification is found at S339. 2 positions are modified to phosphoserine: S348 and S351.

Belongs to the G-protein coupled receptor 1 family. As to quaternary structure, monomer. Can form homodimers. Interacts with CD164. Interacts with ARRB2; the interaction is dependent on the C-terminal phosphorylation of CXCR4 and allows activation of MAPK1 and MAPK3. Interacts with ARR3; the interaction is dependent on the C-terminal phosphorylation of CXCR4 and modulates calcium mobilization. Interacts with RNF113A; the interaction, enhanced by CXCL12, promotes CXCR4 ubiquitination and subsequent degradation. Interacts (via the cytoplasmic C-terminal) with ITCH (via the WW domains I and II); the interaction, enhanced by CXCL12, promotes CXCR4 ubiquitination and leads to its degradation. Interacts with extracellular ubiquitin. Interacts with DBN1; this interaction is enhanced by antigenic stimulation. Following LPS binding, may form a complex with GDF5, HSP90AA1 and HSPA8. Phosphorylated on agonist stimulation. Rapidly phosphorylated on serine and threonine residues in the C-terminal. Phosphorylation at Ser-324 and Ser-325 leads to recruitment of ITCH, ubiquitination and protein degradation. In terms of processing, ubiquitinated after ligand binding, leading to its degradation. Ubiquitinated by ITCH at the cell membrane on agonist stimulation. The ubiquitin-dependent mechanism, endosomal sorting complex required for transport (ESCRT), then targets CXCR4 for lysosomal degradation. This process is dependent also on prior Ser-/Thr-phosphorylation in the C-terminal of CXCR4. Also binding of ARRB1 to STAM negatively regulates CXCR4 sorting to lysosomes though modulating ubiquitination of SFR5S. Post-translationally, sulfation is required for efficient binding of CXCL12/SDF-1alpha and promotes its dimerization. O- and N-glycosylated. N-glycosylation can mask coreceptor function. The O-glycosylation chondroitin sulfate attachment does not affect interaction with CXCL12/SDF-1alpha nor its coreceptor activity.

The protein localises to the cell membrane. It localises to the cell junction. The protein resides in the early endosome. Its subcellular location is the late endosome. It is found in the lysosome. Receptor for the C-X-C chemokine CXCL12/SDF-1 that transduces a signal by increasing intracellular calcium ion levels and enhancing MAPK1/MAPK3 activation. Involved in the AKT signaling cascade. Plays a role in regulation of cell migration, e.g. during wound healing. Acts as a receptor for extracellular ubiquitin; leading to enhanced intracellular calcium ions and reduced cellular cAMP levels. Binds bacterial lipopolysaccharide (LPS) et mediates LPS-induced inflammatory response, including TNF secretion by monocytes. Involved in hematopoiesis and in cardiac ventricular septum formation. Also plays an essential role in vascularization of the gastrointestinal tract, probably by regulating vascular branching and/or remodeling processes in endothelial cells. Involved in cerebellar development. In the CNS, could mediate hippocampal-neuron survival. The sequence is that of C-X-C chemokine receptor type 4 (CXCR4) from Tupaia chinensis (Chinese tree shrew).